The chain runs to 520 residues: NAD(P)H-quinone oxidoreductase subunit 2 (520 aa).

The next 14 helical transmembrane spans lie at 15–35 (ILPE…DLIL), 42–62 (WIGY…YFQW), 79–99 (LSII…LMSI), 106–126 (GTAL…GMFV), 132–152 (LVMI…LTGY), 167–187 (LLIG…LYGL), 210–230 (LGAV…ISAA), 244–264 (PTPV…ALAI), 280–300 (FVFT…ALAQ), 306–326 (MLAY…IAGT), 334–354 (IFYL…IILF), 378–398 (LGLS…GFFG), 400–420 (IYLF…LGLV), and 466–486 (VGLV…NPLF).

Belongs to the complex I subunit 2 family. NDH-1 can be composed of about 15 different subunits; different subcomplexes with different compositions have been identified which probably have different functions.

The protein resides in the cellular thylakoid membrane. The enzyme catalyses a plastoquinone + NADH + (n+1) H(+)(in) = a plastoquinol + NAD(+) + n H(+)(out). The catalysed reaction is a plastoquinone + NADPH + (n+1) H(+)(in) = a plastoquinol + NADP(+) + n H(+)(out). In terms of biological role, NDH-1 shuttles electrons from an unknown electron donor, via FMN and iron-sulfur (Fe-S) centers, to quinones in the respiratory and/or the photosynthetic chain. The immediate electron acceptor for the enzyme in this species is believed to be plastoquinone. Couples the redox reaction to proton translocation, and thus conserves the redox energy in a proton gradient. Cyanobacterial NDH-1 also plays a role in inorganic carbon-concentration. The polypeptide is NAD(P)H-quinone oxidoreductase subunit 2 (Trichormus variabilis (strain ATCC 29413 / PCC 7937) (Anabaena variabilis)).